Here is a 122-residue protein sequence, read N- to C-terminus: LOB domain-containing protein 5 (122 aa).

Residues 8 to 109 form the LOB domain; it reads RPCSVCITKN…AYLRELQEKI (102 aa).

The protein belongs to the LOB domain-containing protein family.

This Arabidopsis thaliana (Mouse-ear cress) protein is LOB domain-containing protein 5 (LBD5).